We begin with the raw amino-acid sequence, 375 residues long: Actin, cytoplasmic (375 aa).

This sequence belongs to the actin family.

The protein resides in the cytoplasm. It localises to the cytoskeleton. The enzyme catalyses ATP + H2O = ADP + phosphate + H(+). Actins are highly conserved proteins that are involved in various types of cell motility and are ubiquitously expressed in all eukaryotic cells. The sequence is that of Actin, cytoplasmic (MIC-ACT-1) from Sterkiella nova (Ciliate).